Reading from the N-terminus, the 716-residue chain is Epidermal growth factor receptor kinase substrate 8-like protein 1 (716 aa).

The PTB domain occupies 35 to 164; it reads QYHVNHLVTF…LQNYRSGRGE (130 aa). Disordered regions lie at residues 175–194, 203–249, 404–472, 528–582, and 600–628; these read EELR…QRRP, VEPS…GPEL, PGVE…ETES, YNIL…SLDP, and SRLA…PRSE. Ser-182 is subject to Phosphoserine. Thr-187 bears the Phosphothreonine mark. Residues 435-446 are compositionally biased toward basic and acidic residues; sequence PWEDPVEKQLQH. Residues 453 to 464 show a composition bias toward polar residues; sequence QSAPQVAVNGQQ. Residues 477-536 form the SH3 domain; it reads KARKWVLCNYDFQARNGSELSVKHRDVLEVLDDRRKWWKVRDHQGQEGYVPYNILTPHPG. A compositionally biased stretch (pro residues) spans 553–563; the sequence is TPPPPPAPAPA. Residues 682 to 713 adopt a coiled-coil conformation; it reads VQRALLEDREKVSELEAVMEKQKKKVEGETKT.

It belongs to the EPS8 family. In terms of assembly, interacts with ABI1. Part of a complex that contains SOS1, ABI1 and EPS8L2. Associates with F-actin. In terms of tissue distribution, detected in placenta, skin, mammary gland, bone marrow and stomach.

Its subcellular location is the cytoplasm. Stimulates guanine exchange activity of SOS1. May play a role in membrane ruffling and remodeling of the actin cytoskeleton. This Mus musculus (Mouse) protein is Epidermal growth factor receptor kinase substrate 8-like protein 1 (Eps8l1).